An 810-amino-acid chain; its full sequence is Protein 4.1 (810 aa).

Positions 1–124 are disordered; sequence MTTEKSLVAE…KEIEFGTSLD (124 aa). Position 14 is a phosphoserine (serine 14). Phosphothreonine is present on threonine 61. The segment covering 62–76 has biased composition (basic and acidic residues); it reads PTHEDLTKNKERTSE. Phosphoserine is present on residues serine 85, serine 86, serine 96, serine 105, serine 122, serine 150, serine 152, serine 153, serine 189, and serine 192. Basic and acidic residues predominate over residues 102–118; the sequence is DVESAKEKCEGGQKEIE. The interval 152 to 203 is disordered; that stretch reads SSAETQPAQEEHREDPDFETKEGGGLEECSKIEVKEESPESKAERELKASQK. A compositionally biased stretch (basic and acidic residues) spans 160-200; that stretch reads QEEHREDPDFETKEGGGLEECSKIEVKEESPESKAERELKA. The 282-residue stretch at 211–492 folds into the FERM domain; it reads MHCKVSLLDD…EHHTFFRLTS (282 aa). A Phosphotyrosine modification is found at tyrosine 223. A Phosphothreonine modification is found at threonine 379. Residues 518–613 form a disordered region; sequence TRQASALIDR…DQAEPEPTEV (96 aa). Phosphoserine is present on residues serine 522, serine 541, serine 543, and serine 555. A compositionally biased stretch (basic and acidic residues) spans 587 to 601; sequence AQKETVKDEEKKEEG. A spectrin--actin-binding region spans residues 615 to 659; that stretch reads KDLDKSQEEIKKHHASISELKKNFMESVPEPRPSEWDKRLSTHSP. A phosphoserine mark is found at serine 620, serine 630, serine 655, and serine 658. Positions 660 to 810 are C-terminal (CTD); the sequence is FRTLNINGQL…VHQETEISEE (151 aa). Phosphothreonine is present on residues threonine 682 and threonine 805.

As to quaternary structure, binds with a high affinity to glycophorin and with lower affinity to band III protein. Associates with the nuclear mitotic apparatus. Binds calmodulin, CPAP and DLG1. Also found to associate with contractile apparatus and tight junctions. Interacts with NUMA1; this interaction is negatively regulated by CDK1 during metaphase and promotes for anaphase-specific localization of NUMA1 in symmetrically dividing cells. Interacts with ATP2B1; regulates small intestinal calcium absorption through regulation of membrane expression of ATP2B1. In terms of processing, O-glycosylated; contains N-acetylglucosamine side chains in the C-terminal domain. Post-translationally, phosphorylated at multiple sites by different protein kinases and each phosphorylation event selectively modulates the protein's functions.

It localises to the nucleus. The protein localises to the cytoplasm. Its subcellular location is the cytoskeleton. It is found in the cell cortex. Functionally, protein 4.1 is a major structural element of the erythrocyte membrane skeleton. It plays a key role in regulating membrane physical properties of mechanical stability and deformability by stabilizing spectrin-actin interaction. Recruits DLG1 to membranes. Required for dynein-dynactin complex and NUMA1 recruitment at the mitotic cell cortex during anaphase. The chain is Protein 4.1 from Canis lupus familiaris (Dog).